We begin with the raw amino-acid sequence, 889 residues long: Extended synaptotagmin-3 (889 aa).

The disordered stretch occupies residues 1-65 (MAQGDPGGQT…GPRDPGQGGA (65 aa)). Topologically, residues 1-66 (MAQGDPGGQT…PRDPGQGGAG (66 aa)) are cytoplasmic. Composition is skewed to basic and acidic residues over residues 17–28 (TDKKPDEPKATE) and 41–58 (PGGEKGLRDPPGGEKGPR). Helical transmembrane passes span 67–91 (EALAEALYGLGRPVLRAVLYLFPVY) and 92–112 (LCGRFGLSPTWLLFGLFLWMF). Residues 113–889 (WTRNKKFKLA…ELTPTGLPTS (777 aa)) lie on the Cytoplasmic side of the membrane. The 179-residue stretch at 155 to 333 (DVERVEWLNK…LPNRFTVPLS (179 aa)) folds into the SMP-LTD domain. C2 domains follow at residues 331-452 (PLSS…DEWF) and 468-618 (WLSL…STIK). Residues lysine 363, aspartate 364, aspartate 376, aspartate 423, glutamate 424, aspartate 425, aspartate 427, aspartate 429, and aspartate 430 each coordinate Ca(2+). The segment at 649-724 (SIKRAQSQQH…GAVPESHTPS (76 aa)) is disordered. Over residues 658-671 (HKSHGKSHQAHHQA) the composition is skewed to basic residues. Composition is skewed to low complexity over residues 672-682 (HQTQQNHTVQQ) and 691-714 (ISTTSQQANTSSSNPAPNQNPNST). Residues 757-879 (MTGEVEVSVR…DLVKGFTKWF (123 aa)) enclose the C2 3 domain. The tract at residues 804–811 (RKWSGRKK) is required for phosphatidylinositol 4,5-bisphosphate-dependent location at the cell membrane.

Belongs to the extended synaptotagmin family.

The protein resides in the cell membrane. The protein localises to the endoplasmic reticulum membrane. Its function is as follows. Tethers the endoplasmic reticulum to the cell membrane and promotes the formation of appositions between the endoplasmic reticulum and the cell membrane. Binds glycerophospholipids in a barrel-like domain and may play a role in cellular lipid transport. This chain is Extended synaptotagmin-3 (esyt3), found in Xenopus tropicalis (Western clawed frog).